The primary structure comprises 444 residues: Na(+)-translocating NADH-quinone reductase subunit A (444 aa).

It belongs to the NqrA family. Composed of six subunits; NqrA, NqrB, NqrC, NqrD, NqrE and NqrF.

It catalyses the reaction a ubiquinone + n Na(+)(in) + NADH + H(+) = a ubiquinol + n Na(+)(out) + NAD(+). Its function is as follows. NQR complex catalyzes the reduction of ubiquinone-1 to ubiquinol by two successive reactions, coupled with the transport of Na(+) ions from the cytoplasm to the periplasm. NqrA to NqrE are probably involved in the second step, the conversion of ubisemiquinone to ubiquinol. The chain is Na(+)-translocating NADH-quinone reductase subunit A from Shewanella frigidimarina (strain NCIMB 400).